A 241-amino-acid polypeptide reads, in one-letter code: Uridylate kinase (241 aa).

12-15 lines the ATP pocket; that stretch reads KLSG. An involved in allosteric activation by GTP region spans residues 20–25; that stretch reads GATGYG. Gly54 is a binding site for UMP. ATP is bound by residues Gly55 and Arg59. Residues Asp74 and 135-142 each bind UMP; that span reads TGNPYMTT. 3 residues coordinate ATP: Asn163, Tyr169, and Asp172.

Belongs to the UMP kinase family. In terms of assembly, homohexamer.

The protein localises to the cytoplasm. It catalyses the reaction UMP + ATP = UDP + ADP. The protein operates within pyrimidine metabolism; CTP biosynthesis via de novo pathway; UDP from UMP (UMPK route): step 1/1. Its activity is regulated as follows. Allosterically activated by GTP. Inhibited by UTP. In terms of biological role, catalyzes the reversible phosphorylation of UMP to UDP. The protein is Uridylate kinase of Dehalococcoides mccartyi (strain CBDB1).